We begin with the raw amino-acid sequence, 418 residues long: Arrestin domain-containing protein 4 (418 aa).

Short sequence motifs (PPxY motif) lie at residues 350-353 (PPNY) and 395-398 (PPLY).

Belongs to the arrestin family. As to quaternary structure, interacts with ADRB2. Interacts (via PPxY motifs) with ITCH, NEDD4L and WWP2. Interacts with AVPR2. Identified in a complex containing at least ARRDC4, AVPR2 and HGS. Interacts with SLC11A2; controls the incorporation of SLC11A2 into extracellular vesicles through an ubiquitination-dependent mechanism. Interacts with TRIM65.

It localises to the early endosome. The protein resides in the cell membrane. Its subcellular location is the cytoplasmic vesicle. Its function is as follows. Functions as an adapter recruiting ubiquitin-protein ligases to their specific substrates. Plays a role in endocytosis of activated G protein-coupled receptors (GPCRs). Through an ubiquitination-dependent mechanism also plays a role in the incorporation of SLC11A2 into extracellular vesicles. May play a role in glucose uptake. Participates in innate immune response by promoting IFIH1/MDA5 activation through interaction with TRIM65. This is Arrestin domain-containing protein 4 (ARRDC4) from Homo sapiens (Human).